The primary structure comprises 295 residues: Inorganic pyrophosphatase 1 (295 aa).

D19 serves as the catalytic Nucleophile. Positions 19 and 21 each coordinate Mg(2+). Residue D21 is the Proton donor of the active site. Substrate is bound by residues D30 and D105. Position 190 (D190) interacts with Mg(2+).

This sequence belongs to the HAD-like hydrolase superfamily. In terms of assembly, tetramer. Requires Mg(2+) as cofactor. Fe(2+) serves as cofactor. Ni(2+) is required as a cofactor. It depends on Co(2+) as a cofactor. The cofactor is Mn(2+).

It carries out the reaction diphosphate + H2O = 2 phosphate + H(+). In terms of biological role, catalyzes the specific cleavage of pyrophosphate. This Arabidopsis thaliana (Mouse-ear cress) protein is Inorganic pyrophosphatase 1 (PS2).